We begin with the raw amino-acid sequence, 224 residues long: MYVFCICDLSKRFSLSFQPNFLCELGLQKQGFFHVAGVDEVGRGPLAGPVVTAAVILDKDRIPDGLNDSKKLSFLQRNRLYHEILQSALAASIASLCARTIDQSNIRKATLEAMRRCIIGLAVPAHYVLVDGRDIPSELPCPAMALIKGDQRSVSIAAASIIAKVTRDRMMECAGQVYTNYGLEKHVGYATLAHRRALDKYGPIVGLHRYSFAPLKERYRNDVS.

Residues F33–S224 form the RNase H type-2 domain. 3 residues coordinate a divalent metal cation: D39, E40, and D131.

It belongs to the RNase HII family. The cofactor is Mn(2+). It depends on Mg(2+) as a cofactor.

The protein localises to the cytoplasm. The catalysed reaction is Endonucleolytic cleavage to 5'-phosphomonoester.. Its function is as follows. Endonuclease that specifically degrades the RNA of RNA-DNA hybrids. The chain is Ribonuclease HII from Bartonella tribocorum (strain CIP 105476 / IBS 506).